Reading from the N-terminus, the 119-residue chain is Beta-2-microglobulin (119 aa).

A signal peptide spans 1 to 20 (MARFVVVALLVQLSLFGLEA). An Ig-like C1-type domain is found at 25-114 (PKIQVYSRYP…VTFSTPKTVK (90 aa)). The cysteines at positions 45 and 100 are disulfide-linked.

Belongs to the beta-2-microglobulin family. Heterodimer of an alpha chain and a beta chain. Beta-2-microglobulin is the beta-chain of major histocompatibility complex class I molecules.

It is found in the secreted. Functionally, component of the class I major histocompatibility complex (MHC). Involved in the presentation of peptide antigens to the immune system. This chain is Beta-2-microglobulin (B2M), found in Saguinus imperator (Emperor tamarin).